We begin with the raw amino-acid sequence, 645 residues long: UPF0313 protein CLM_0251 (645 aa).

The Radical SAM core domain occupies 295-566 (AIKEVKFSIT…RMQRALLQFS (272 aa)). 3 residues coordinate [4Fe-4S] cluster: cysteine 309, cysteine 313, and cysteine 316. The tract at residues 598 to 645 (NKPYKKSHKKNNAKNNNNHYNKNNNYNKNKDISKKNKKNSLSKHKKRK) is disordered. Residues 600–609 (PYKKSHKKNN) show a composition bias toward basic residues. Residues 610 to 624 (AKNNNNHYNKNNNYN) show a composition bias toward low complexity. The span at 632 to 645 (KNKKNSLSKHKKRK) shows a compositional bias: basic residues.

This sequence belongs to the UPF0313 family. It depends on [4Fe-4S] cluster as a cofactor.

The polypeptide is UPF0313 protein CLM_0251 (Clostridium botulinum (strain Kyoto / Type A2)).